A 400-amino-acid chain; its full sequence is Homoserine O-acetyltransferase (400 aa).

Over residues 1–11 (MVKVQSIQSQA) the composition is skewed to polar residues. The interval 1–24 (MVKVQSIQSQAVHAEERAHEADHP) is disordered. A compositionally biased stretch (basic and acidic residues) spans 13–23 (HAEERAHEADH). The 310-residue stretch at 64–373 (NAILVCHALT…TDRGHDAFLL (310 aa)) folds into the AB hydrolase-1 domain. Residue serine 169 is the Nucleophile of the active site. Substrate is bound at residue arginine 239. Residues aspartate 335 and histidine 368 contribute to the active site. Residue aspartate 369 coordinates substrate.

This sequence belongs to the AB hydrolase superfamily. MetX family. As to quaternary structure, homodimer.

The protein localises to the cytoplasm. It carries out the reaction L-homoserine + acetyl-CoA = O-acetyl-L-homoserine + CoA. It functions in the pathway amino-acid biosynthesis; L-methionine biosynthesis via de novo pathway; O-acetyl-L-homoserine from L-homoserine: step 1/1. Its function is as follows. Transfers an acetyl group from acetyl-CoA to L-homoserine, forming acetyl-L-homoserine. This Rhodopseudomonas palustris (strain BisB18) protein is Homoserine O-acetyltransferase.